Consider the following 407-residue polypeptide: Peptidase T (407 aa).

Residue histidine 81 coordinates Zn(2+). The active site involves aspartate 83. Aspartate 142 is a binding site for Zn(2+). Glutamate 176 (proton acceptor) is an active-site residue. Zn(2+)-binding residues include glutamate 177, aspartate 199, and histidine 381.

This sequence belongs to the peptidase M20B family. Requires Zn(2+) as cofactor.

Its subcellular location is the cytoplasm. The catalysed reaction is Release of the N-terminal residue from a tripeptide.. Cleaves the N-terminal amino acid of tripeptides. In Streptococcus pneumoniae (strain JJA), this protein is Peptidase T.